Reading from the N-terminus, the 462-residue chain is MAATVNLELDPIFLKALGFLHSKSKDSAEKLKALLDESLARGIDSSYRPSQKDVEPPKISSTKNISIKQEPKISSSLPSGNNNGKVLTTEKVKKEAEKRPADKMKSDITEGVDIPKKPRLEKPETQSSPITVQTSKDLAMADLSSFEETSADDFAMEMGLACVVCRQMMVASGNQLVECQECHNLYHRDCHKPQVTDKEANDPRLVWYCARCTRQMKRMAQKTQKPPQKPAPAVVSVTPAVKDPLVKKPETKLKQETTFLAFKRTEVKTSTVISGNSSSASVSSSVTSGLTGWAAFAAKTSSAGPSTAKLSSTTQNSTGKPATSSANQKPVGLTGLATSSKGGIGSKIGSNNSTTPTVPLKPPPPLTLGKTGLSRSVSCDNVSKVGLPSPSSLVPGNSSQLSGNGNTGTSGPSGSTTSKTTSESSSSPSASLKGPTSQESQLNAMKRLQMVKKKAAQKKLKK.

A disordered region spans residues 42–129; the sequence is GIDSSYRPSQ…LEKPETQSSP (88 aa). Over residues 59–86 the composition is skewed to polar residues; that stretch reads ISSTKNISIKQEPKISSSLPSGNNNGKV. A Glycyl lysine isopeptide (Lys-Gly) (interchain with G-Cter in SUMO2) cross-link involves residue lysine 68. Residues 88-124 show a composition bias toward basic and acidic residues; sequence TTEKVKKEAEKRPADKMKSDITEGVDIPKKPRLEKPE. At serine 128 the chain carries Phosphoserine. The PHD-type zinc finger occupies 159–215; the sequence is GLACVVCRQMMVASGNQLVECQECHNLYHRDCHKPQVTDKEANDPRLVWYCARCTRQ. Lysine 254 is covalently cross-linked (Glycyl lysine isopeptide (Lys-Gly) (interchain with G-Cter in SUMO2)). The segment covering 301-328 has biased composition (polar residues); the sequence is SSAGPSTAKLSSTTQNSTGKPATSSANQ. Residues 301–462 are disordered; that stretch reads SSAGPSTAKL…KKAAQKKLKK (162 aa). Composition is skewed to low complexity over residues 347–358 and 396–437; these read KIGSNNSTTPTV and GNSS…GPTS. A compositionally biased stretch (basic residues) spans 449–462; it reads QMVKKKAAQKKLKK.

The protein belongs to the Integrator subunit 12 family. As to quaternary structure, component of the Integrator complex, composed of core subunits INTS1, INTS2, INTS3, INTS4, INTS5, INTS6, INTS7, INTS8, INTS9/RC74, INTS10, INTS11/CPSF3L, INTS12, INTS13, INTS14 and INTS15. The core complex associates with protein phosphatase 2A subunits PPP2CA and PPP2R1A, to form the Integrator-PP2A (INTAC) complex. Dephosphorylated at Ser-128 by the PNUTS-PP1 complex, promoting RNA polymerase II transcription pause-release.

Its subcellular location is the nucleus. Its function is as follows. Component of the integrator complex, a multiprotein complex that terminates RNA polymerase II (Pol II) transcription in the promoter-proximal region of genes. The integrator complex provides a quality checkpoint during transcription elongation by driving premature transcription termination of transcripts that are unfavorably configured for transcriptional elongation: the complex terminates transcription by (1) catalyzing dephosphorylation of the C-terminal domain (CTD) of Pol II subunit POLR2A/RPB1 and SUPT5H/SPT5, (2) degrading the exiting nascent RNA transcript via endonuclease activity and (3) promoting the release of Pol II from bound DNA. The integrator complex is also involved in terminating the synthesis of non-coding Pol II transcripts, such as enhancer RNAs (eRNAs), small nuclear RNAs (snRNAs), telomerase RNAs and long non-coding RNAs (lncRNAs). Mediates recruitment of cytoplasmic dynein to the nuclear envelope, probably as component of the integrator complex. This is Integrator complex subunit 12 (INTS12) from Macaca fascicularis (Crab-eating macaque).